The following is a 247-amino-acid chain: MAIALVTGGSRGIGRATALLLAQEGYTVAVNYQQNLHAAQEVMNLITQAGGKAFVLQADISDENQVVAMFTAIDQHDEPLAALVNNAGILFTQCTVENLTAERINRVLSTNVTGYFLCCREAVKRMALKNGGSGGAIVNVSSVASRLGSPGEYVDYAASKGAIDTLTTGLSLEVAAQGIRVNCVRPGFIYTEMHASGGEPGRVDRVKSNIPMQRGGQAEEVAQAIVWLLSDKASYVTGSFIDLAGGK.

4–28 lines the NADP(+) pocket; sequence ALVTGGSRGIGRATALLLAQEGYTV. S142 is a binding site for substrate. The active-site Proton acceptor is Y156.

It belongs to the short-chain dehydrogenases/reductases (SDR) family.

This is an uncharacterized protein from Escherichia coli (strain K12).